We begin with the raw amino-acid sequence, 98 residues long: Plastocyanin (98 aa).

One can recognise a Plastocyanin-like domain in the interval 1-98 (AQIVKLGGDD…AGMKMTITVQ (98 aa)). Cu cation-binding residues include His-38, Cys-83, His-86, and Met-91.

It belongs to the plastocyanin family. It depends on Cu(2+) as a cofactor.

It is found in the plastid. Its subcellular location is the chloroplast thylakoid membrane. Functionally, participates in electron transfer between P700 and the cytochrome b6-f complex in photosystem I. The chain is Plastocyanin (PETE) from Ulva arasakii (Sea lettuce).